Reading from the N-terminus, the 249-residue chain is Diaminopimelate epimerase (249 aa).

Asn-11 and Asn-60 together coordinate substrate. Cys-69 (proton donor) is an active-site residue. Residues 70 to 71 (GN), Asn-164, and 182 to 183 (ER) contribute to the substrate site. Residue Cys-192 is the Proton acceptor of the active site. A substrate-binding site is contributed by 193-194 (GT).

It belongs to the diaminopimelate epimerase family. Homodimer.

Its subcellular location is the cytoplasm. The enzyme catalyses (2S,6S)-2,6-diaminopimelate = meso-2,6-diaminopimelate. The protein operates within amino-acid biosynthesis; L-lysine biosynthesis via DAP pathway; DL-2,6-diaminopimelate from LL-2,6-diaminopimelate: step 1/1. Catalyzes the stereoinversion of LL-2,6-diaminopimelate (L,L-DAP) to meso-diaminopimelate (meso-DAP), a precursor of L-lysine and an essential component of the bacterial peptidoglycan. The polypeptide is Diaminopimelate epimerase (Campylobacter jejuni subsp. doylei (strain ATCC BAA-1458 / RM4099 / 269.97)).